The following is a 949-amino-acid chain: Phosphocholine transferase AnkX (949 aa).

Residues 155–289 (LNPEQIPDLA…IFNTVEIIEQ (135 aa)) enclose the Fido domain. ANK repeat units follow at residues 391–420 (VGKT…DLSL), 424–453 (DGKT…SQED), 464–494 (HGKT…QINE), 498–527 (SGSS…DISD), 554–583 (LNKE…DIDI), 588–617 (DKAT…NTRL), 658–687 (NGNP…RVDF), 691–720 (LGNN…TLLH), 725–767 (ERRN…DLNK), and 771–800 (KGKT…HTNI).

It is found in the secreted. The protein resides in the host cytoplasm. The catalysed reaction is [Rab1 protein]-L-serine + CDP-choline = [Rab1 protein]-O-phosphocholine-L-serine + CMP + H(+). In terms of biological role, virulence effector that plays a role in hijacking the host vesicular trafficking by recruiting the small guanosine triphosphatase (GTPase) Rab1 to the cytosolic face of the Legionella-containing vacuole (LCVs). Acts as a phosphocholine transferase by mediating the addition of phosphocholine to Ser residues of host RAB1 (RAB1A, RAB1B or RAB1C) and RAB35, leading to displacement of GDP dissociation inhibitors (GDI). Phosphocholination of target proteins also impairs accessibility to GTPase effector LepB. Can act on both GDP-bound and GTP-bound Rab proteins. The polypeptide is Phosphocholine transferase AnkX (ankX) (Legionella pneumophila subsp. pneumophila (strain Philadelphia 1 / ATCC 33152 / DSM 7513)).